The sequence spans 253 residues: Major prion protein (253 aa).

An N-terminal signal peptide occupies residues 1-22; the sequence is MANLGCWMLVLFVATWSDLGLC. Positions 23-38 are interaction with ADGRG6; the sequence is KKRPKPGGWNTGGSRY. The interaction with GRB2, ERI3 and SYN1 stretch occupies residues 23–230; the sequence is KKRPKPGGWN…ESQAYYQRGS (208 aa). The interval 26–108 is disordered; the sequence is PKPGGWNTGG…WNKPSKPKTN (83 aa). Tandem repeats lie at residues 51–59, 60–67, 68–75, 76–83, and 84–91. A 5 X 8 AA tandem repeats of P-H-G-G-G-W-G-Q region spans residues 51–91; that stretch reads PQGGGGWGQPHGGGWGQPHGGGWGQPHGGGWGQPHGGGWGQ. The segment covering 52-95 has biased composition (gly residues); the sequence is QGGGGWGQPHGGGWGQPHGGGWGQPHGGGWGQPHGGGWGQGGGT. Positions 61, 62, 63, 69, 70, 71, 77, 78, 79, 85, 86, and 87 each coordinate Cu(2+). The cysteines at positions 179 and 214 are disulfide-linked. N-linked (GlcNAc...) asparagine glycosylation is found at Asn181 and Asn197. Ser230 carries GPI-anchor amidated serine lipidation. A propeptide spans 231–253 (removed in mature form); it reads SMVLFSSPPVILLISFLIFLIVG.

It belongs to the prion family. In terms of assembly, monomer and homodimer. Has a tendency to aggregate into amyloid fibrils containing a cross-beta spine, formed by a steric zipper of superposed beta-strands. Soluble oligomers may represent an intermediate stage on the path to fibril formation. Copper binding may promote oligomerization. Interacts with GRB2, APP, ERI3/PRNPIP and SYN1. Mislocalized cytosolically exposed PrP interacts with MGRN1; this interaction alters MGRN1 subcellular location and causes lysosomal enlargement. Interacts with KIAA1191. Interacts with ADGRG6. In terms of processing, the glycosylation pattern (the amount of mono-, di- and non-glycosylated forms or glycoforms) seems to differ in normal and CJD prion.

The protein resides in the cell membrane. It localises to the golgi apparatus. In terms of biological role, its primary physiological function is unclear. May play a role in neuronal development and synaptic plasticity. May be required for neuronal myelin sheath maintenance. May promote myelin homeostasis through acting as an agonist for ADGRG6 receptor. May play a role in iron uptake and iron homeostasis. Soluble oligomers are toxic to cultured neuroblastoma cells and induce apoptosis (in vitro). Association with GPC1 (via its heparan sulfate chains) targets PRNP to lipid rafts. Also provides Cu(2+) or Zn(2+) for the ascorbate-mediated GPC1 deaminase degradation of its heparan sulfate side chains. The protein is Major prion protein (PRNP) of Homo sapiens (Human).